The primary structure comprises 557 residues: MKAILRASRIGRVILRYRLDALLEGTPAERWLRLAKPFVPRASAEIAAQSRGARLRLALQELGPIFVKFGQILSTRRDLIPPDVAEELTLLQDRVKPFDGEAARLIVERALGLPVSVAFAAFDTTPLASASIAQVHAATLPPDANGLRREVVVKVLRPDIERQIDADIALLHSLATLVERTHPRADKIRPREVVAEIEGTLSAELDLQREGANASVLRRFWEGSDDLYVPEVIWSHTAERALTLERVYGIPSDDVAKLDAAGIDRKALAAKGVRVFYTQVFRDNFFHADAHAGNIWVDSDPERRLNPRFIALDFGIMGQLSQEDQYYLAENFMAIFHKDYRRMAELHVEAGWMPSNVRIDELEAAARSVCEPYFTRPLSEISLAEVLIKLFRVAQRYELTLQPQLILLQKTLLNIEGVGRQLDPKLDIWAVARPVLERILRERYSPRRVLGELRKRLPEIMTHAPDMPRLVHSWLKQQVEGRHQLDIRSSELRALDLSLRKLQTRVVTAITGSGLLVVAAVLYGLHPDGWYLGTVPVWSWISGGAGSAALLIAWLRR.

A Protein kinase domain is found at 121–509 (AFDTTPLASA…RKLQTRVVTA (389 aa)). Residues 127-135 (LASASIAQV) and lysine 154 each bind ATP. Catalysis depends on aspartate 289, which acts as the Proton acceptor. The next 2 membrane-spanning stretches (helical) occupy residues 506–526 (VVTA…YGLH) and 535–555 (VPVW…IAWL).

Belongs to the ABC1 family. UbiB subfamily.

It is found in the cell inner membrane. It functions in the pathway cofactor biosynthesis; ubiquinone biosynthesis [regulation]. Functionally, is probably a protein kinase regulator of UbiI activity which is involved in aerobic coenzyme Q (ubiquinone) biosynthesis. The polypeptide is Probable protein kinase UbiB (Xanthomonas campestris pv. campestris (strain 8004)).